Here is a 98-residue protein sequence, read N- to C-terminus: Lipolysis-activating peptide 1-alpha chain (98 aa).

A signal peptide spans 1–22 (MMKFVLFGMIVILFSLMGSIRG). Residues 26–89 (PGNYPTNAYG…IWNAVKNHCT (64 aa)) enclose the LCN-type CS-alpha/beta domain. Intrachain disulfides connect Cys40–Cys63, Cys49–Cys68, and Cys53–Cys70. Residue Asn96 is modified to Asparagine amide.

It belongs to the long (3 C-C) scorpion toxin superfamily. As to quaternary structure, monomer (edited version) and heterodimer (non-edited version) of this alpha chain and a beta chain (AC Q95P90). As to expression, expressed by the venom gland.

It localises to the secreted. Functionally, the heterodimer non-edited LVP1 induces lipolysis in rat adipocytes. Induction of lipolysis by LVP1 appears to be mediated through the beta-2 adrenergic receptor pathway (ADRB2). In terms of biological role, the edited BmKBTx, similar to beta-toxins, may modulate voltage-gated sodium channels (Nav) and may block voltage-gated potassium channels (Kv). Seems to be a rare component in the venom. This Olivierus martensii (Manchurian scorpion) protein is Lipolysis-activating peptide 1-alpha chain (LVP1a).